Consider the following 492-residue polypeptide: NADH-quinone oxidoreductase subunit N (492 aa).

14 helical membrane-spanning segments follow: residues 13–33, 43–63, 82–102, 110–132, 136–155, 169–189, 210–230, 245–265, 272–292, 306–326, 331–351, 377–397, 410–430, and 457–477; these read MLPVLLVLVGAIVSTLGGFWL, ILFVLASGASLVWLWGGAPWA, AALLLGGTVLLGALLTLLVSL, VSFAEFDALLMYAVTGCLLIAFS, IVMLIGLEIMSLASYVLATL, FLLGSVGSAILIYGLAFLYGA, IGILVTGTLLVLSGFGVKIAL, PTLVSLFLSTVVKVAAFAGML, LAAGPGWHSVLQILVALTLVI, LLAYSAVAHTGFLAMTLLGDT, AALGYYLLVYTLMTVGALAVV, AVALAFCLASLAGLPPFAGFF, GYLLISVLAVLSSVAALVYYL, and VAVALSLIGIVVLGLLPNLWY.

The protein belongs to the complex I subunit 2 family. In terms of assembly, NDH-1 is composed of 15 different subunits. Subunits NuoA, H, J, K, L, M, N constitute the membrane sector of the complex.

Its subcellular location is the cell membrane. It carries out the reaction a quinone + NADH + 5 H(+)(in) = a quinol + NAD(+) + 4 H(+)(out). Its function is as follows. NDH-1 shuttles electrons from NADH, via FMN and iron-sulfur (Fe-S) centers, to quinones in the respiratory chain. The immediate electron acceptor for the enzyme in this species is believed to be a menaquinone. Couples the redox reaction to proton translocation (for every two electrons transferred, four hydrogen ions are translocated across the cytoplasmic membrane), and thus conserves the redox energy in a proton gradient. This chain is NADH-quinone oxidoreductase subunit N, found in Deinococcus radiodurans (strain ATCC 13939 / DSM 20539 / JCM 16871 / CCUG 27074 / LMG 4051 / NBRC 15346 / NCIMB 9279 / VKM B-1422 / R1).